Reading from the N-terminus, the 566-residue chain is Glucose starvation modulator protein 1 (566 aa).

The segment at residues 20-48 is a DNA-binding region (zn(2)-C6 fungal-type); sequence CVFCHQKHLQCSNERPCKNCVKRNIAHGC. 2 disordered regions span residues 65 to 93 and 250 to 270; these read PGAVSNKQSTPRKKLKTGPVSTSVSPMDS and KQASPSPSNTSTSENNTNTLS. Over residues 83–93 the composition is skewed to polar residues; the sequence is PVSTSVSPMDS. Over residues 253–270 the composition is skewed to low complexity; that stretch reads SPSPSNTSTSENNTNTLS.

The protein belongs to the ERT1/acuK family.

It localises to the nucleus. Functionally, transcription factor which regulates nonfermentable carbon utilization. This chain is Glucose starvation modulator protein 1 (ZCF23), found in Candida albicans (strain SC5314 / ATCC MYA-2876) (Yeast).